Consider the following 1061-residue polypeptide: Ribonuclease 3 (1061 aa).

Disordered regions lie at residues 1–20 (MDFT…QIHQ) and 149–244 (PLHS…SYNE). Over residues 156–173 (KTPERKENEEDSDSEIRS) the composition is skewed to basic and acidic residues. 2 consecutive RNase III domains span residues 586 to 759 (LSVF…LDSG) and 811 to 935 (FHRL…VDKG). Residues glutamate 851, aspartate 921, and glutamate 924 each contribute to the Mg(2+) site. The region spanning 962–1037 (DAKSHLQQWC…AENALAALEK (76 aa)) is the DRBM domain.

The protein belongs to the ribonuclease III family. The cofactor is Mg(2+). It depends on Mn(2+) as a cofactor.

Its subcellular location is the nucleus. The enzyme catalyses Endonucleolytic cleavage to 5'-phosphomonoester.. In terms of biological role, executes the initial step of microRNA (miRNA) processing in the nucleus, that is the cleavage of pri-miRNA to release pre-miRNA. Involved in pre-rRNA processing. Cleaves double-strand RNA and does not cleave single-strand RNA. Involved in fertility. Required for the function or synthesis of the let-7 miRNA. The chain is Ribonuclease 3 from Caenorhabditis briggsae.